The sequence spans 236 residues: Aspartate/glutamate leucyltransferase (236 aa).

This sequence belongs to the R-transferase family. Bpt subfamily.

The protein localises to the cytoplasm. The catalysed reaction is N-terminal L-glutamyl-[protein] + L-leucyl-tRNA(Leu) = N-terminal L-leucyl-L-glutamyl-[protein] + tRNA(Leu) + H(+). It catalyses the reaction N-terminal L-aspartyl-[protein] + L-leucyl-tRNA(Leu) = N-terminal L-leucyl-L-aspartyl-[protein] + tRNA(Leu) + H(+). Its function is as follows. Functions in the N-end rule pathway of protein degradation where it conjugates Leu from its aminoacyl-tRNA to the N-termini of proteins containing an N-terminal aspartate or glutamate. This chain is Aspartate/glutamate leucyltransferase, found in Halorhodospira halophila (strain DSM 244 / SL1) (Ectothiorhodospira halophila (strain DSM 244 / SL1)).